A 501-amino-acid chain; its full sequence is Beta-secretase 1 (501 aa).

The signal sequence occupies residues M1–G21. Positions T22–R45 are excised as a propeptide. The Extracellular segment spans residues T22–T457. The disordered stretch occupies residues L39 to G58. In terms of domain architecture, Peptidase A1 spans Y75–A416. D93 is a catalytic residue. Position 126 is an N6-acetyllysine (K126). N153, N172, and N223 each carry an N-linked (GlcNAc...) asparagine glycan. 3 disulfide bridges follow: C216–C420, C278–C443, and C330–C380. 3 positions are modified to N6-acetyllysine: K275, K279, and K285. Residue D289 is part of the active site. An N6-acetyllysine mark is found at K299, K300, and K307. A glycan (N-linked (GlcNAc...) asparagine) is linked at N354. The chain crosses the membrane as a helical span at residues I458 to C478. Residues C474, C478, C482, and C485 are each lipidated (S-palmitoyl cysteine). Residues Q479 to K501 are Cytoplasmic-facing. Residues Q479–K501 form an interaction with RTN3 region. The short motif at D496–L500 is the DXXLL element. S498 is subject to Phosphoserine. K501 is covalently cross-linked (Glycyl lysine isopeptide (Lys-Gly) (interchain with G-Cter in ubiquitin)).

The protein belongs to the peptidase A1 family. As to quaternary structure, monomer. Interacts (via DXXLL motif) with GGA1, GGA2 and GGA3 (via their VHS domain); the interaction highly increases when BACE1 is phosphorylated at Ser-498. Interacts with RTN1; RTN2; RTN3 and RTN4; the interaction leads to inhibition of amyloid precursor protein processing. Interacts with SNX6. Interacts with PCSK9. Interacts with NAT8 and NAT8B. Interacts with BIN1. Interacts (via extracellular domain) with ADAM10 (via extracellular domain). Interacts with SORL1; this interaction may affect binding with APP and hence reduce APP cleavage. Interacts with NRDC AND NRG1. In terms of processing, N-Glycosylated. Addition of a bisecting N-acetylglucosamine by MGAT3 blocks lysosomal targeting, further degradation and is required for maintaining stability under stress conditions. Post-translationally, palmitoylation mediates lipid raft localization. Acetylated in the endoplasmic reticulum at Lys-126, Lys-275, Lys-279, Lys-285, Lys-299, Lys-300 and Lys-307. Acetylation by NAT8 and NAT8B is transient and deacetylation probably occurs in the Golgi. Acetylation regulates the maturation, the transport to the plasma membrane, the stability and the expression of the protein. In terms of processing, ubiquitinated at Lys-501, ubiquitination leads to lysosomal degradation. Monoubiquitinated and 'Lys-63'-linked polyubitinated. Deubiquitnated by USP8; inhibits lysosomal degradation. Post-translationally, phosphorylation at Ser-498 is required for interaction with GGA1 and retrograded transport from endosomal compartments to the trans-Golgi network. Non-phosphorylated BACE1 enters a direct recycling route to the cell surface. In terms of tissue distribution, expressed in the brain, specifically in neurons and astrocytes (at protein level).

The protein localises to the cell membrane. It is found in the golgi apparatus. It localises to the trans-Golgi network. Its subcellular location is the endoplasmic reticulum. The protein resides in the endosome. The protein localises to the late endosome. It is found in the early endosome. It localises to the cell surface. Its subcellular location is the cytoplasmic vesicle membrane. The protein resides in the membrane raft. The protein localises to the lysosome. It is found in the recycling endosome. It localises to the cell projection. Its subcellular location is the axon. The protein resides in the dendrite. The catalysed reaction is Broad endopeptidase specificity. Cleaves Glu-Val-Asn-Leu-|-Asp-Ala-Glu-Phe in the Swedish variant of Alzheimer's amyloid precursor protein.. Inhibited by RTN3 and RTN4. In terms of biological role, responsible for the proteolytic processing of the amyloid precursor protein (APP). Cleaves at the N-terminus of the A-beta peptide sequence, between residues 671 and 672 of APP, leads to the generation and extracellular release of beta-cleaved soluble APP, and a corresponding cell-associated C-terminal fragment which is later released by gamma-secretase. Cleaves CHL1. This Mus musculus (Mouse) protein is Beta-secretase 1.